Here is a 316-residue protein sequence, read N- to C-terminus: MKRHTRKIAIIGTGLVGSSCAYSIVNQGICEELLLIDINHERAVGEAMDLSHCINFTNTRTKVYAGSYEDCKDMDIVIITAGPAPKPGQSRLDTLGASAKIMESVVGGVMESGFDGIFLLASNPVDIITYQVWKLSGLPRNRVIGTGTSLDSSRLRTILSEMLHVDPRSIHGYSLGEHGDSQMVAWSHVTVGGKPILQILEEQKERFGEIDLDEIVEKTAKAGWEIYKRKGTTYYGIGNSLAYIASSIFNDDHRVIAVSAILDGEYGEYDICTGVPAIITRDGIREIVELNLTEDEESRFAKSNDILRDYMKTIGY.

NAD(+)-binding residues include V16, D37, R42, and Y68. R91 contributes to the substrate binding site. Residues S104, 121 to 123 (ASN), and T146 each bind NAD(+). 123-126 (NPVD) provides a ligand contact to substrate. 151–154 (DSSR) provides a ligand contact to substrate. Positions 156 and 171 each coordinate beta-D-fructose 1,6-bisphosphate. The active-site Proton acceptor is H178. Residue T233 coordinates substrate.

It belongs to the LDH/MDH superfamily. LDH family. In terms of assembly, homotetramer.

Its subcellular location is the cytoplasm. The catalysed reaction is (S)-lactate + NAD(+) = pyruvate + NADH + H(+). It functions in the pathway fermentation; pyruvate fermentation to lactate; (S)-lactate from pyruvate: step 1/1. With respect to regulation, allosterically activated by fructose 1,6-bisphosphate (FBP). Functionally, catalyzes the conversion of lactate to pyruvate. The sequence is that of L-lactate dehydrogenase 3 from Bacillus anthracis.